A 432-amino-acid polypeptide reads, in one-letter code: G-protein coupled receptor 22 (432 aa).

At 1–45 (MCFSPVLEINMQSESNVTVRDDIDDIDTNMYQPLSYPLSFQVSLT) the chain is on the extracellular side. N16 is a glycosylation site (N-linked (GlcNAc...) asparagine). The chain crosses the membrane as a helical span at residues 46-66 (GFLMLEIVLGLGSNLTVLVLY). Over 67 to 85 (CMKSNLINSVSNIITMNLH) the chain is Cytoplasmic. A helical membrane pass occupies residues 86 to 106 (VLDVIICVGCIPLTIVILLLS). Residues 107–115 (LESNTALIC) are Extracellular-facing. Residues 116–136 (CFHEACVSFASVSTAINVFAI) traverse the membrane as a helical segment. The Cytoplasmic portion of the chain corresponds to 137-156 (TLDRYDISVKPANRILTMGR). The helical transmembrane segment at 157–177 (AVMLMTSIWIFSFFSFLIPFI) threads the bilayer. Residues 178–208 (EVNFFSLQSGNTWANKTLLCVSTSEYYTELG) lie on the Extracellular side of the membrane. Residue N192 is glycosylated (N-linked (GlcNAc...) asparagine). Residues 209–229 (MYYHLLVQIPIFFFTVIVMLI) traverse the membrane as a helical segment. Residues 230-314 (TYTKILQALN…ERQKRVFKMS (85 aa)) lie on the Cytoplasmic side of the membrane. Residues 315–335 (LLIISTFLLCWTPISVLNTTI) form a helical membrane-spanning segment. The Extracellular segment spans residues 336-348 (LCLGPSDLLVKLR). A helical transmembrane segment spans residues 349–369 (LCFLVMAYGTTIFHPLLYAFT). Residues 370-432 (RQKFQKVLKS…KCLVPQVVTD (63 aa)) lie on the Cytoplasmic side of the membrane.

This sequence belongs to the G-protein coupled receptor 1 family. Abundant levels detected in the brain and heart and no detectable expression in other peripheral tissues.

Its subcellular location is the cell membrane. Functionally, orphan G-protein coupled receptor. Seems to act through a G(i)/G(o) mediated pathway. May be involved in ciliogenesis. The protein is G-protein coupled receptor 22 (Gpr22) of Mus musculus (Mouse).